A 717-amino-acid chain; its full sequence is Polyribonucleotide nucleotidyltransferase (717 aa).

The Mg(2+) site is built by Asp488 and Asp494. In terms of domain architecture, KH spans 555–614 (PRIEVMNIPVDKIREVIGSGGKVIREIVEKTGAKINIEDDGTVKIASSSGKEIEAARKWI). Residues 624–692 (GQIYEGTVVK…ERGKVRLSMK (69 aa)) form the S1 motif domain.

This sequence belongs to the polyribonucleotide nucleotidyltransferase family. Mg(2+) is required as a cofactor.

The protein localises to the cytoplasm. It catalyses the reaction RNA(n+1) + phosphate = RNA(n) + a ribonucleoside 5'-diphosphate. Its function is as follows. Involved in mRNA degradation. Catalyzes the phosphorolysis of single-stranded polyribonucleotides processively in the 3'- to 5'-direction. This Sinorhizobium fredii (strain NBRC 101917 / NGR234) protein is Polyribonucleotide nucleotidyltransferase.